The following is a 103-amino-acid chain: UPF0145 protein Rsph17025_2361 (103 aa).

This sequence belongs to the UPF0145 family.

The sequence is that of UPF0145 protein Rsph17025_2361 from Cereibacter sphaeroides (strain ATCC 17025 / ATH 2.4.3) (Rhodobacter sphaeroides).